A 314-amino-acid chain; its full sequence is Porphobilinogen deaminase (314 aa).

Cys-234 is modified (S-(dipyrrolylmethanemethyl)cysteine).

Belongs to the HMBS family. As to quaternary structure, monomer. It depends on dipyrromethane as a cofactor.

The catalysed reaction is 4 porphobilinogen + H2O = hydroxymethylbilane + 4 NH4(+). Its pathway is porphyrin-containing compound metabolism; protoporphyrin-IX biosynthesis; coproporphyrinogen-III from 5-aminolevulinate: step 2/4. Tetrapolymerization of the monopyrrole PBG into the hydroxymethylbilane pre-uroporphyrinogen in several discrete steps. The sequence is that of Porphobilinogen deaminase from Mycobacterium marinum (strain ATCC BAA-535 / M).